Reading from the N-terminus, the 187-residue chain is Ribosome-recycling factor (187 aa).

Belongs to the RRF family.

Its subcellular location is the cytoplasm. Responsible for the release of ribosomes from messenger RNA at the termination of protein biosynthesis. May increase the efficiency of translation by recycling ribosomes from one round of translation to another. This is Ribosome-recycling factor from Paracoccus denitrificans (strain Pd 1222).